A 361-amino-acid chain; its full sequence is Holliday junction branch migration complex subunit RuvB (361 aa).

Polar residues-rich tracts occupy residues 1–15 (MAIK…SPNV) and 28–40 (ERST…QQEA). Residues 1–41 (MAIKRSGNNNLSPNVKSDLLSPEVIPQERSTSPELEQQEAS) form a disordered region. The tract at residues 13–203 (PNVKSDLLSP…FGLIQRLRFY (191 aa)) is large ATPase domain (RuvB-L). ATP is bound by residues L42, R43, G84, K87, T88, T89, 150–152 (EDF), R193, Y203, and R240. T88 contributes to the Mg(2+) binding site. The segment at 204–274 (EVDELQQIIL…LASEALDLYQ (71 aa)) is small ATPAse domain (RuvB-S). The tract at residues 277–361 (KRGLDWTDRL…PTPLLPWKES (85 aa)) is head domain (RuvB-H). Residues R332 and R337 each contribute to the DNA site.

This sequence belongs to the RuvB family. Homohexamer. Forms an RuvA(8)-RuvB(12)-Holliday junction (HJ) complex. HJ DNA is sandwiched between 2 RuvA tetramers; dsDNA enters through RuvA and exits via RuvB. An RuvB hexamer assembles on each DNA strand where it exits the tetramer. Each RuvB hexamer is contacted by two RuvA subunits (via domain III) on 2 adjacent RuvB subunits; this complex drives branch migration. In the full resolvosome a probable DNA-RuvA(4)-RuvB(12)-RuvC(2) complex forms which resolves the HJ.

It localises to the cytoplasm. The enzyme catalyses ATP + H2O = ADP + phosphate + H(+). Functionally, the RuvA-RuvB-RuvC complex processes Holliday junction (HJ) DNA during genetic recombination and DNA repair, while the RuvA-RuvB complex plays an important role in the rescue of blocked DNA replication forks via replication fork reversal (RFR). RuvA specifically binds to HJ cruciform DNA, conferring on it an open structure. The RuvB hexamer acts as an ATP-dependent pump, pulling dsDNA into and through the RuvAB complex. RuvB forms 2 homohexamers on either side of HJ DNA bound by 1 or 2 RuvA tetramers; 4 subunits per hexamer contact DNA at a time. Coordinated motions by a converter formed by DNA-disengaged RuvB subunits stimulates ATP hydrolysis and nucleotide exchange. Immobilization of the converter enables RuvB to convert the ATP-contained energy into a lever motion, pulling 2 nucleotides of DNA out of the RuvA tetramer per ATP hydrolyzed, thus driving DNA branch migration. The RuvB motors rotate together with the DNA substrate, which together with the progressing nucleotide cycle form the mechanistic basis for DNA recombination by continuous HJ branch migration. Branch migration allows RuvC to scan DNA until it finds its consensus sequence, where it cleaves and resolves cruciform DNA. In terms of biological role, participates in UV-tolerance of Synechocystis PCC 6803. This is Holliday junction branch migration complex subunit RuvB from Synechocystis sp. (strain ATCC 27184 / PCC 6803 / Kazusa).